A 194-amino-acid polypeptide reads, in one-letter code: Imidazoleglycerol-phosphate dehydratase (194 aa).

This sequence belongs to the imidazoleglycerol-phosphate dehydratase family.

It localises to the cytoplasm. It catalyses the reaction D-erythro-1-(imidazol-4-yl)glycerol 3-phosphate = 3-(imidazol-4-yl)-2-oxopropyl phosphate + H2O. The protein operates within amino-acid biosynthesis; L-histidine biosynthesis; L-histidine from 5-phospho-alpha-D-ribose 1-diphosphate: step 6/9. This is Imidazoleglycerol-phosphate dehydratase from Chloroherpeton thalassium (strain ATCC 35110 / GB-78).